We begin with the raw amino-acid sequence, 567 residues long: Glutathione/L-cysteine transport system ATP-binding/permease protein CydC (567 aa).

Helical transmembrane passes span 14 to 34 (ILTL…MQAE), 44 to 64 (FNGK…IAFI), 130 to 150 (FLPK…YVFF), 156 to 176 (AIIL…LGLV), 240 to 260 (SFAL…FLGL), and 266 to 286 (DILL…FLPV). Residues 17 to 298 (LITCLTLIQT…VGNDYHATLN (282 aa)) form the ABC transmembrane type-1 domain. One can recognise an ABC transporter domain in the interval 321–561 (LQLEAWSDQD…NGVYTKLVKA (241 aa)). 360-367 (GASGAGKS) is a binding site for ATP.

The protein belongs to the ABC transporter superfamily. Cysteine exporter (TC 3.A.1.129.1) family. As to quaternary structure, forms a heterodimer with CydD.

The protein localises to the cell membrane. It catalyses the reaction L-cysteine(in) + ATP + H2O = L-cysteine(out) + ADP + phosphate + H(+). It carries out the reaction glutathione(in) + ATP + H2O = glutathione(out) + ADP + phosphate + H(+). In terms of biological role, part of the ABC transporter complex CydDC that exports the reduced low-molecular-weight thiols cysteine and glutathione from the cell. Export of these thiol-containing redox-active molecules may be crucial for redox homeostasis, permitting correct assembly of various respiratory complexes and formation of correct disulfide bonds in secreted proteins. CydC contains transmembrane domains (TMD), which form a pore in the membrane, and an ATP-binding domain (NBD), which is responsible for energy generation. The chain is Glutathione/L-cysteine transport system ATP-binding/permease protein CydC (cydC) from Bacillus subtilis (strain 168).